We begin with the raw amino-acid sequence, 412 residues long: Transcription factor IIIA (412 aa).

A C2H2-type 1; degenerate zinc finger spans residues 20–43 (YLCQYCGISRSKNYLITKHIQSHH). 3 C2H2-type zinc fingers span residues 66–88 (HTCQECGAEFKKPAHLKQHMQSH), 94–118 (FTCYVDDCAASYRRKDHLNRHLLTH), and 123–148 (FKCPKENCKSEFSVQGNVGRHVKKYH). The disordered stretch occupies residues 144–207 (VKKYHSNDNR…NGNGDSQPAE (64 aa)). Basic and acidic residues predominate over residues 148–188 (HSNDNRDKDNTGLGDGDKDNTCKGDDDKEKSGSGGCEKENE). Residue Lys-185 forms a Glycyl lysine isopeptide (Lys-Gly) (interchain with G-Cter in ubiquitin) linkage. The C2H2-type 5 zinc-finger motif lies at 215–239 (VVCKEIGCGKAFKYPSQLQKHQDSH). The segment at 247 to 272 (AFCSEPGCMKYFTNEECLKSHIRSCH) adopts a C2H2-type 6; degenerate zinc-finger fold. The C2H2-type 7; degenerate zinc-finger motif lies at 275–296 (INCEICGSKHLKKNIKRHLRTH). The C2H2-type 8 zinc-finger motif lies at 305 to 330 (IKCEVEGCSSTFSKASNLQKHMKAVH). The segment at 336 to 362 (FVCGFPGCGMRFAYKHVRNKHENSGYH) adopts a C2H2-type 9; degenerate zinc-finger fold. Residues 384–391 (LKRKQVTA) carry the Nuclear localization signal motif.

Protein product TFIIIA (44 kDa) is proteolytically cleaved into TFIIIA-C (34 kDa). Expressed in seedlings, flowers, siliques and seeds.

The protein resides in the nucleus. It localises to the nucleolus. In terms of biological role, essential protein. Isoform 1 is a transcription activator the binds both 5S rDNA and 5S rRNA and stimulates the transcription of 5S rRNA gene. Isoform 1 regulates 5S rRNA levels during development. This chain is Transcription factor IIIA, found in Arabidopsis thaliana (Mouse-ear cress).